The following is a 516-amino-acid chain: Endo-acting ulvan lyase (516 aa).

Positions 1-24 (MLEKTTLKNIILIHFLMFLAVVTA) are cleaved as a signal peptide. Cysteines 38 and 65 form a disulfide. The Ca(2+) site is built by glycine 42, asparagine 44, aspartate 62, serine 64, alanine 67, and asparagine 68. Substrate is bound at residue tyrosine 138. Lysine 143 serves as the catalytic Proton acceptor. Substrate contacts are provided by residues 191–195 (EGDGR) and 260–263 (YRVK). Tyrosine 260 serves as the catalytic Proton donor/acceptor. The ulvan-binding domain stretch occupies residues 289–429 (PIGDVYKLKN…VWKAIAVESL (141 aa)). The propeptide at 430-516 (SVDENAILAS…NKYHKKLIVK (87 aa)) is removed by the type IX secretion system (T9SS).

The protein belongs to the polysaccharide lyase 28 family. It depends on Ca(2+) as a cofactor.

The protein resides in the secreted. Its function is as follows. Ulvan lyase involved in ulvan degradation. Ulvan is the main polysaccharide component of the Ulvales (green seaweed) cell wall. It is composed of disaccharide building blocks comprising 3-sulfated rhamnose (Rha3S) linked to D-glucuronic acid (GlcA), L-iduronic acid (IduA), or D-xylose (Xyl). Ulvan lyase catalyzes the endolytic cleavage of the glycosidic bond between Rha3S and the uronic acids GlcA or IduA, producing oligosaccharides that have unsaturated 4-deoxy-L-threo-hex-4-enopyranosiduronic acid (deltaUA) at the non-reducing end. This results eventually in the degradation of the ulvan polysaccharide into deltaUA-Rha3S disaccharides and deltaUA-Rha3S-Xyl-Rha3S tetrasaccharides. This chain is Endo-acting ulvan lyase, found in Formosa agariphila (strain DSM 15362 / KCTC 12365 / LMG 23005 / KMM 3901 / M-2Alg 35-1).